The sequence spans 152 residues: Ubiquitin-conjugating enzyme E2 N (152 aa).

Residues 3-149 (GLPRRIIKET…ARAWTRLYAM (147 aa)) enclose the UBC core domain. Lysine 82 is subject to N6-acetyllysine. Catalysis depends on cysteine 87, which acts as the Glycyl thioester intermediate. A Glycyl lysine isopeptide (Lys-Gly) (interchain with G-Cter in ISG15) cross-link involves residue lysine 92.

This sequence belongs to the ubiquitin-conjugating enzyme family. As to quaternary structure, heterodimer with UBE2V2. Interacts (UBE2V2-UBE2N heterodimer) with the E3 ligase STUB1 (via the U-box domain); the complex has a specific 'Lys-63'-linked polyubiquitination activity. Interacts with RNF8 and RNF168. Interacts with RNF11. Interacts with the E3 ligases, HLTF and SHPRH; the interactions promote the 'Lys-63'-linked polyubiquitination of PCNA upon genotoxic stress and lead to DNA repair. Interacts with ARIH2 (via RING-type 2). Interacts with OTUB1; leading to inhibit E2-conjugating activity. Interacts with GPS2; leading to inhibit E2-conjugating activity. Interacts with RIGI and RNF135; involved in RIGI ubiquitination and activation. In terms of processing, conjugation to ISG15 impairs formation of the thioester bond with ubiquitin but not interaction with UBE2V2.

It carries out the reaction S-ubiquitinyl-[E1 ubiquitin-activating enzyme]-L-cysteine + [E2 ubiquitin-conjugating enzyme]-L-cysteine = [E1 ubiquitin-activating enzyme]-L-cysteine + S-ubiquitinyl-[E2 ubiquitin-conjugating enzyme]-L-cysteine.. The protein operates within protein modification; protein ubiquitination. Activity is inhibited by binding to OTUB1, which prevents 'Lys-63'-linked polyubiquitination. Activity is inhibited by GPS2, leading to prevent 'Lys-63'-linked polyubiquitination. Its function is as follows. The UBE2V1-UBE2N and UBE2V2-UBE2N heterodimers catalyze the synthesis of non-canonical 'Lys-63'-linked polyubiquitin chains. This type of polyubiquitination does not lead to protein degradation by the proteasome. Mediates transcriptional activation of target genes. Plays a role in the control of progress through the cell cycle and differentiation. Plays a role in the error-free DNA repair pathway and contributes to the survival of cells after DNA damage. Acts together with the E3 ligases, HLTF and SHPRH, in the 'Lys-63'-linked poly-ubiquitination of PCNA upon genotoxic stress, which is required for DNA repair. Appears to act together with E3 ligase RNF5 in the 'Lys-63'-linked polyubiquitination of JKAMP thereby regulating JKAMP function by decreasing its association with components of the proteasome and ERAD. Promotes TRIM5 capsid-specific restriction activity and the UBE2V1-UBE2N heterodimer acts in concert with TRIM5 to generate 'Lys-63'-linked polyubiquitin chains which activate the MAP3K7/TAK1 complex which in turn results in the induction and expression of NF-kappa-B and MAPK-responsive inflammatory genes. Together with RNF135 and UB2V1, catalyzes the viral RNA-dependent 'Lys-63'-linked polyubiquitination of RIGI to activate the downstream signaling pathway that leads to interferon beta production. UBE2V1-UBE2N together with TRAF3IP2 E3 ubiquitin ligase mediate 'Lys-63'-linked polyubiquitination of TRAF6, a component of IL17A-mediated signaling pathway. This Bos taurus (Bovine) protein is Ubiquitin-conjugating enzyme E2 N (UBE2N).